A 317-amino-acid chain; its full sequence is Melanocyte-stimulating hormone receptor (317 aa).

Over methionine 1–glutamate 37 the chain is Extracellular. Asparagine 29 is a glycosylation site (N-linked (GlcNAc...) asparagine). The chain crosses the membrane as a helical span at residues valine 38 to isoleucine 63. Residues alanine 64–proline 72 are Cytoplasmic-facing. A helical membrane pass occupies residues methionine 73–leucine 93. Topologically, residues glutamate 94 to asparagine 118 are extracellular. The chain crosses the membrane as a helical span at residues valine 119–methionine 140. At aspartate 141 to arginine 163 the chain is on the cytoplasmic side. The helical transmembrane segment at alanine 164–tyrosine 183 threads the bilayer. Topologically, residues aspartate 184–cysteine 191 are extracellular. A helical transmembrane segment spans residues leucine 192–leucine 211. The Cytoplasmic portion of the chain corresponds to isoleucine 212–alanine 240. The helical transmembrane segment at alanine 241–valine 266 threads the bilayer. Over cysteine 267 to asparagine 279 the chain is Extracellular. Residues phenylalanine 280 to phenylalanine 300 traverse the membrane as a helical segment. The Cytoplasmic segment spans residues arginine 301–tryptophan 317.

Belongs to the G-protein coupled receptor 1 family. As to quaternary structure, interacts with MGRN1, but does not undergo MGRN1-mediated ubiquitination; this interaction competes with GNAS-binding and thus inhibits agonist-induced cAMP production. Interacts with OPN3; the interaction results in a decrease in MC1R-mediated cAMP signaling and ultimately a decrease in melanin production in melanocytes.

The protein resides in the cell membrane. Receptor for MSH (alpha, beta and gamma) and ACTH. The activity of this receptor is mediated by G proteins which activate adenylate cyclase. Mediates melanogenesis, the production of eumelanin (black/brown) and phaeomelanin (red/yellow), via regulation of cAMP signaling in melanocytes. The sequence is that of Melanocyte-stimulating hormone receptor (MC1R) from Eulemur fulvus fulvus (Brown lemur).